The following is a 156-amino-acid chain: uncharacterized protein (156 aa).

This is an uncharacterized protein from Methanocaldococcus jannaschii (strain ATCC 43067 / DSM 2661 / JAL-1 / JCM 10045 / NBRC 100440) (Methanococcus jannaschii).